The primary structure comprises 431 residues: Adenylosuccinate synthetase (431 aa).

GTP is bound by residues Gly12 to Lys18 and Gly40 to Thr42. Asp13 acts as the Proton acceptor in catalysis. Mg(2+) contacts are provided by Asp13 and Gly40. IMP-binding positions include Asp13 to Lys16, Asn38 to His41, Thr129, Arg143, Gln224, Thr239, and Arg303. His41 (proton donor) is an active-site residue. Position 299–305 (Thr299–Arg305) interacts with substrate. Residues Arg305, Lys331 to Asp333, and Ser413 to Gly415 contribute to the GTP site.

The protein belongs to the adenylosuccinate synthetase family. Homodimer. Requires Mg(2+) as cofactor.

The protein resides in the cytoplasm. It catalyses the reaction IMP + L-aspartate + GTP = N(6)-(1,2-dicarboxyethyl)-AMP + GDP + phosphate + 2 H(+). Its pathway is purine metabolism; AMP biosynthesis via de novo pathway; AMP from IMP: step 1/2. Plays an important role in the de novo pathway of purine nucleotide biosynthesis. Catalyzes the first committed step in the biosynthesis of AMP from IMP. This is Adenylosuccinate synthetase from Ehrlichia canis (strain Jake).